Consider the following 325-residue polypeptide: Cytochrome c1, heme protein, mitochondrial (325 aa).

Residues 1-84 constitute a mitochondrion transit peptide; sequence MAAAAASLRR…AVALHSAVSA (84 aa). Residues 85-287 are Mitochondrial intermembrane-facing; the sequence is SDLELHPPSY…SEPEHDHRKR (203 aa). The Cytochrome c domain occupies 108-209; it reads TSIRRGFQVY…IVRARHGGED (102 aa). 4 residues coordinate heme c: cysteine 121, cysteine 124, histidine 125, and methionine 244. Residues 288 to 308 form a helical membrane-spanning segment; that stretch reads MGLKMLLMMGLLLPLTYAMKR. Over 309 to 325 the chain is Mitochondrial matrix; sequence HKWSVLKSRKLAYRPPK.

The protein belongs to the cytochrome c family. Component of the ubiquinol-cytochrome c oxidoreductase (cytochrome b-c1 complex, complex III, CIII), a multisubunit enzyme composed of 11 subunits. The complex is composed of 3 respiratory subunits cytochrome b, cytochrome c1 and Rieske protein UQCRFS1, 2 core protein subunits UQCRC1/QCR1 and UQCRC2/QCR2, and 6 low-molecular weight protein subunits UQCRH/QCR6, UQCRB/QCR7, UQCRQ/QCR8, UQCR10/QCR9, UQCR11/QCR10 and subunit 9, the cleavage product of Rieske protein UQCRFS1. The complex exists as an obligatory dimer and forms supercomplexes (SCs) in the inner mitochondrial membrane with NADH-ubiquinone oxidoreductase (complex I, CI) and cytochrome c oxidase (complex IV, CIV), resulting in different assemblies (supercomplex SCI(1)III(2)IV(1) and megacomplex MCI(2)III(2)IV(2)). Interacts with FLVCR2; this interaction occurs in the absence of heme and is disrupted upon heme binding. Heme c is required as a cofactor.

The protein resides in the mitochondrion inner membrane. The catalysed reaction is a quinol + 2 Fe(III)-[cytochrome c](out) = a quinone + 2 Fe(II)-[cytochrome c](out) + 2 H(+)(out). Component of the ubiquinol-cytochrome c oxidoreductase, a multisubunit transmembrane complex that is part of the mitochondrial electron transport chain which drives oxidative phosphorylation. The respiratory chain contains 3 multisubunit complexes succinate dehydrogenase (complex II, CII), ubiquinol-cytochrome c oxidoreductase (cytochrome b-c1 complex, complex III, CIII) and cytochrome c oxidase (complex IV, CIV), that cooperate to transfer electrons derived from NADH and succinate to molecular oxygen, creating an electrochemical gradient over the inner membrane that drives transmembrane transport and the ATP synthase. The cytochrome b-c1 complex catalyzes electron transfer from ubiquinol to cytochrome c, linking this redox reaction to translocation of protons across the mitochondrial inner membrane, with protons being carried across the membrane as hydrogens on the quinol. In the process called Q cycle, 2 protons are consumed from the matrix, 4 protons are released into the intermembrane space and 2 electrons are passed to cytochrome c. Cytochrome c1 is a catalytic core subunit containing a c-type heme. It transfers electrons from the [2Fe-2S] iron-sulfur cluster of the Rieske protein to cytochrome c. The protein is Cytochrome c1, heme protein, mitochondrial (Cyc1) of Mus musculus (Mouse).